Consider the following 678-residue polypeptide: MAITSVIEQMRQLIQLIAKHNHAYYVMDQPTISDSEYDHLFHQLKALEEQYPEFVQADSPTTKVGGQALSKFESVTHVVPMLSLGNVFNQEDLFAFARRVEERLPNQKVQYEVELKLDGLAISLWYENGVLVRGVTRGDGETGEDITQNVKTIRNLPKVLHSEKYEIPRLLEVRGEVLMPKSGFEKLNADQEAKGEKTFANPRNAAAGSLRQLDPNIAAARPLAFYAYGIAQCEPNHGLTTMHDSLQWLTELGFQIAERQYLCNSIQEVQQRYEQIQQERPNLQVEIDGMVVKVDDLKQQQQLGFLSREPRWATAYKFPAQAALTTVEQIDWQVGRTGTLTPVARLNPVFVGGVTVSNVTLHNIGEIHRLDVRIGDTVSVYRTGDVIPKVEKVWPEFRPAEAEVVHLPESCPVCASPVVMPEGEALARCSGGLYCAAQRIEAIRHFVSRKAMDIEGLGDRWVESLLRLDLLKDVADIYHLHEHRETLLGIEKMGEKSVQNLIDAIEASKKTTLARFIYALGIRGVGETTARMLANTFQTLEALKAANVEALKKTPDVGDITAEWIADFFLAPHNIEVLDRLIAAGIHWDAPTAPTRQPLNGESWVLTGTLEQMTRDQATQMLQALGARVSGSVSSKTKCVVAGEKAGSKLEKAAKLGIPVMNETDFLSLMAGYGQTLS.

Residues 34-38 (DSEYD), 83-84 (SL), and Glu-114 contribute to the NAD(+) site. Lys-116 (N6-AMP-lysine intermediate) is an active-site residue. 4 residues coordinate NAD(+): Arg-137, Glu-176, Lys-293, and Lys-317. Positions 411, 414, 429, and 435 each coordinate Zn(2+). The BRCT domain maps to 594–678 (PTRQPLNGES…LMAGYGQTLS (85 aa)).

It belongs to the NAD-dependent DNA ligase family. LigA subfamily. The cofactor is Mg(2+). Requires Mn(2+) as cofactor.

The enzyme catalyses NAD(+) + (deoxyribonucleotide)n-3'-hydroxyl + 5'-phospho-(deoxyribonucleotide)m = (deoxyribonucleotide)n+m + AMP + beta-nicotinamide D-nucleotide.. DNA ligase that catalyzes the formation of phosphodiester linkages between 5'-phosphoryl and 3'-hydroxyl groups in double-stranded DNA using NAD as a coenzyme and as the energy source for the reaction. It is essential for DNA replication and repair of damaged DNA. This chain is DNA ligase, found in Acinetobacter baumannii (strain SDF).